The following is a 602-amino-acid chain: Myotubularin (602 aa).

The segment at 1–40 (MASSSASDCDAHPVERESMRKVSQDGVRQDMSKSGPRLPG) is disordered. Residues 9 to 31 (CDAHPVERESMRKVSQDGVRQDM) are compositionally biased toward basic and acidic residues. A Phosphoserine modification is found at serine 18. The 70-residue stretch at 28–97 (RQDMSKSGPR…GVISRIEKMG (70 aa)) folds into the GRAM domain. Residues 163–538 (GWAIYNPVEE…RHLELWVNYY (376 aa)) enclose the Myotubularin phosphatase domain. The a 1,2-diacyl-sn-glycero-3-phospho-(1D-myo-inositol-3,5-bisphosphate) site is built by asparagine 288, asparagine 313, and isoleucine 314. Positions 288, 313, and 314 each coordinate a 1,2-diacyl-sn-glycero-3-phospho-(1D-myo-inositol-3-phosphate). Cysteine 375 serves as the catalytic Phosphocysteine intermediate. A 1,2-diacyl-sn-glycero-3-phospho-(1D-myo-inositol-3,5-bisphosphate) contacts are provided by serine 376, aspartate 377, glycine 378, tryptophan 379, aspartate 380, arginine 381, lysine 417, and arginine 421. A 1,2-diacyl-sn-glycero-3-phospho-(1D-myo-inositol-3-phosphate) contacts are provided by serine 376, aspartate 377, glycine 378, tryptophan 379, aspartate 380, and arginine 381. Arginine 421 contacts a 1,2-diacyl-sn-glycero-3-phospho-(1D-myo-inositol-3-phosphate). A Phosphothreonine modification is found at threonine 495. Residues 578–592 (PTKLTDSSTPPSGSA) show a composition bias toward polar residues. Residues 578-602 (PTKLTDSSTPPSGSAQIAPRMQTHF) are disordered.

Belongs to the protein-tyrosine phosphatase family. Non-receptor class myotubularin subfamily. As to quaternary structure, heterodimer with MTMR12. Interacts with KMT2A/MLL1 (via SET domain). Interacts with DES in skeletal muscle but not in cardiac muscle. Interacts with SPEG.

The protein localises to the cytoplasm. It localises to the cell membrane. Its subcellular location is the cell projection. The protein resides in the filopodium. It is found in the ruffle. The protein localises to the late endosome. It localises to the myofibril. Its subcellular location is the sarcomere. It catalyses the reaction a 1,2-diacyl-sn-glycero-3-phospho-(1D-myo-inositol-3-phosphate) + H2O = a 1,2-diacyl-sn-glycero-3-phospho-(1D-myo-inositol) + phosphate. The catalysed reaction is a 1,2-diacyl-sn-glycero-3-phospho-(1D-myo-inositol-3,5-bisphosphate) + H2O = a 1,2-diacyl-sn-glycero-3-phospho-(1D-myo-inositol-5-phosphate) + phosphate. The enzyme catalyses 1,2-dioctanoyl-sn-glycero-3-phospho-(1-D-myo-inositol-3-phosphate) + H2O = 1,2-dioctanoyl-sn-glycero-3-phospho-(1D-myo-inositol) + phosphate. It carries out the reaction 1,2-dioctanoyl-sn-glycero-3-phospho-(1D-myo-inositol-3,5-bisphosphate) + H2O = 1,2-dioctanoyl-sn-glycero-3-phospho-(1D-myo-inositol-5-phosphate) + phosphate. It catalyses the reaction 1,2-dihexadecanoyl-sn-glycero-3-phospho-(1D-myo-inositol-3,5-phosphate) + H2O = 1,2-dihexadecanoyl-sn-glycero-3-phospho-(1D-myo-inositol-5-phosphate) + phosphate. With respect to regulation, allosterically activated by phosphatidylinositol 5-phosphate (PI5P). Lipid phosphatase which dephosphorylates phosphatidylinositol 3-monophosphate (PI3P) and phosphatidylinositol 3,5-bisphosphate (PI(3,5)P2). Has also been shown to dephosphorylate phosphotyrosine- and phosphoserine-containing peptides. Negatively regulates EGFR degradation through regulation of EGFR trafficking from the late endosome to the lysosome. Plays a role in vacuolar formation and morphology. Regulates desmin intermediate filament assembly and architecture. Plays a role in mitochondrial morphology and positioning. Required for skeletal muscle maintenance but not for myogenesis. In skeletal muscles, stabilizes MTMR12 protein levels. The sequence is that of Myotubularin from Rattus norvegicus (Rat).